We begin with the raw amino-acid sequence, 98 residues long: uncharacterized protein (98 aa).

The region spanning 30–98 (KKVVPSVKIH…RRKFCRVRLE (69 aa)) is the MOSC domain.

This is an uncharacterized protein from Haemophilus influenzae (strain ATCC 51907 / DSM 11121 / KW20 / Rd).